The following is a 305-amino-acid chain: Mycothiol acetyltransferase (305 aa).

2 consecutive N-acetyltransferase domains span residues 10 to 154 (DRLD…VVLE) and 156 to 305 (ISLR…YARA). E38 serves as a coordination point for 1D-myo-inositol 2-(L-cysteinylamino)-2-deoxy-alpha-D-glucopyranoside. Position 82-84 (82-84 (LAV)) interacts with acetyl-CoA. The 1D-myo-inositol 2-(L-cysteinylamino)-2-deoxy-alpha-D-glucopyranoside site is built by E183, K225, and E238. Acetyl-CoA is bound by residues 242-244 (VAI) and 249-255 (QGRGLGR). 1D-myo-inositol 2-(L-cysteinylamino)-2-deoxy-alpha-D-glucopyranoside is bound at residue Y276. 281 to 286 (NASALH) is a binding site for acetyl-CoA.

This sequence belongs to the acetyltransferase family. MshD subfamily. In terms of assembly, monomer.

It catalyses the reaction 1D-myo-inositol 2-(L-cysteinylamino)-2-deoxy-alpha-D-glucopyranoside + acetyl-CoA = mycothiol + CoA + H(+). Its function is as follows. Catalyzes the transfer of acetyl from acetyl-CoA to desacetylmycothiol (Cys-GlcN-Ins) to form mycothiol. The chain is Mycothiol acetyltransferase from Rhodococcus opacus (strain B4).